Consider the following 165-residue polypeptide: DELTA-actitoxin-Oor1a (165 aa).

Residues A1–S17 are N-terminal region. Residues S41, V74, S92, P94, and Y125 each contribute to the phosphocholine site. The trp-rich region, which is important for the binding to lipid membrane stretch occupies residues S92–K107.

Belongs to the actinoporin family. Sea anemone subfamily. Octamer or nonamer in membranes. Monomer in the soluble state.

The protein resides in the secreted. It is found in the nematocyst. Its subcellular location is the target cell membrane. Functionally, pore-forming protein that forms cations-selective hydrophilic pores of around 1 nm and causes cardiac stimulation and cytolysis. Pore formation is a multi-step process that involves specific recognition of membrane sphingomyelin (but neither cholesterol nor phosphatidylcholine) using aromatic rich region and adjacent phosphocholine (POC) binding site, firm binding to the membrane (mainly driven by hydrophobic interactions) accompanied by the transfer of the N-terminal region to the lipid-water interface and finally pore formation after oligomerization of monomers. Cytolytic effects include red blood cells hemolysis, platelet aggregation and lysis, cytotoxic and cytostatic effects on fibroblasts. Lethality in mammals has been ascribed to severe vasospasm of coronary vessels, cardiac arrhythmia, and inotropic effects. The sequence is that of DELTA-actitoxin-Oor1a from Oulactis orientalis (Japan anemone).